We begin with the raw amino-acid sequence, 159 residues long: Large ribosomal subunit protein uL11 (159 aa).

The protein belongs to the universal ribosomal protein uL11 family. Part of the ribosomal stalk of the 50S ribosomal subunit. Interacts with L10 and the large rRNA to form the base of the stalk. L10 forms an elongated spine to which L12 dimers bind in a sequential fashion forming a multimeric L10(L12)X complex.

In terms of biological role, forms part of the ribosomal stalk which helps the ribosome interact with GTP-bound translation factors. The sequence is that of Large ribosomal subunit protein uL11 from Methanococcus vannielii (strain ATCC 35089 / DSM 1224 / JCM 13029 / OCM 148 / SB).